The following is a 149-amino-acid chain: Arginine repressor (149 aa).

It belongs to the ArgR family.

It localises to the cytoplasm. It functions in the pathway amino-acid biosynthesis; L-arginine biosynthesis [regulation]. Its pathway is amino-acid degradation; L-arginine degradation via ADI pathway. Its function is as follows. Regulates arginine biosynthesis genes and activates arginine deiminase pathway genes. The chain is Arginine repressor (argR) from Bacillus licheniformis (strain ATCC 14580 / DSM 13 / JCM 2505 / CCUG 7422 / NBRC 12200 / NCIMB 9375 / NCTC 10341 / NRRL NRS-1264 / Gibson 46).